Consider the following 1320-residue polypeptide: Inner centromere protein A (1320 aa).

5 disordered regions span residues 53–75 (KNSNYLNNNNNNNNNNNNNNNIS), 426–447 (QEKQQQQQEKQQEKQQQQQPVV), 611–679 (NEPI…VVPP), 701–877 (EEEE…NTAS), and 896–1215 (TKSP…DGDE). Composition is skewed to low complexity over residues 54–75 (NSNYLNNNNNNNNNNNNNNNIS), 429–447 (QQQQQEKQQEKQQQQQPVV), and 615–640 (QQPSSSSSQLSSSQQPSSSSSSSSSS). Residues 221-444 (QQNQFQEQHK…KQQEKQQQQQ (224 aa)) adopt a coiled-coil conformation. The segment covering 653–668 (TIVTSKPTNKVQPQSL) has biased composition (polar residues). Over residues 669–679 (NSNINNNVVPP) the composition is skewed to low complexity. The stretch at 683 to 855 (AAIANKLKKQ…QKKKTVQTIL (173 aa)) forms a coiled coil. A compositionally biased stretch (basic and acidic residues) spans 701–835 (EEEERLRKKQ…QEKEKQEKQK (135 aa)). Positions 851-863 (VQTILPTPQTPSR) are enriched in polar residues. A compositionally biased stretch (low complexity) spans 864–877 (SANNNYDDAANTAS). Acidic residues-rich tracts occupy residues 908 to 926 (DDQDDDDCEDYDGTDENSE) and 934 to 951 (QDDSDQEIEEQFENDSDE). A compositionally biased stretch (low complexity) spans 965 to 977 (NKNKNSNNSNNNN). Basic and acidic residues predominate over residues 981–1000 (QSRKDKSIVFDSDSLNRNHN). Low complexity-rich tracts occupy residues 1026-1040 (SNMKNNNNNNTYSNS) and 1047-1061 (SPPSSVSDYSPSSES). Residues 1062–1071 (NDCFSPLTPT) are compositionally biased toward polar residues. Residues 1072–1096 (NNNKINNNKINNNNSNNNSFNNSNS) are compositionally biased toward low complexity. Positions 1120 to 1136 (SKTSPFLTIRNTPSPLK) are enriched in polar residues. Positions 1143-1154 (NMSSASSLSSFD) are enriched in low complexity. Over residues 1155–1170 (SDNDSDYNDNDIDDGE) the composition is skewed to acidic residues. Residues 1175–1187 (PNENFTTPLKNQE) show a composition bias toward polar residues. Low complexity predominate over residues 1188 to 1198 (NNNNNNSNNSN). The segment covering 1199–1209 (TQYPIITSPPS) has biased composition (polar residues).

The protein belongs to the INCENP family. Interacts with aurK.

The protein localises to the chromosome. The protein resides in the centromere. It is found in the cytoplasm. Its subcellular location is the cytoskeleton. It localises to the spindle. The protein localises to the nucleus. The protein resides in the cleavage furrow. Chromosomal passenger protein that seems to be required for chromosome segregation and the onset of cytokinesis during mitosis. Plays a key role in the abscission of daughter cells at the end of cytokinesis and in the establishment or maintenance of a bipolar spindle. This Dictyostelium discoideum (Social amoeba) protein is Inner centromere protein A (icpA).